The primary structure comprises 153 residues: SsrA-binding protein (153 aa).

A compositionally biased stretch (basic and acidic residues) spans 133–143; it reads ADLKERDDKRQ. The disordered stretch occupies residues 133-153; sequence ADLKERDDKRQMQQALKQQQY. Residues 144–153 show a composition bias toward low complexity; that stretch reads MQQALKQQQY.

This sequence belongs to the SmpB family.

It localises to the cytoplasm. Its function is as follows. Required for rescue of stalled ribosomes mediated by trans-translation. Binds to transfer-messenger RNA (tmRNA), required for stable association of tmRNA with ribosomes. tmRNA and SmpB together mimic tRNA shape, replacing the anticodon stem-loop with SmpB. tmRNA is encoded by the ssrA gene; the 2 termini fold to resemble tRNA(Ala) and it encodes a 'tag peptide', a short internal open reading frame. During trans-translation Ala-aminoacylated tmRNA acts like a tRNA, entering the A-site of stalled ribosomes, displacing the stalled mRNA. The ribosome then switches to translate the ORF on the tmRNA; the nascent peptide is terminated with the 'tag peptide' encoded by the tmRNA and targeted for degradation. The ribosome is freed to recommence translation, which seems to be the essential function of trans-translation. The polypeptide is SsrA-binding protein (Protochlamydia amoebophila (strain UWE25)).